A 358-amino-acid polypeptide reads, in one-letter code: Bi-functional coumaroyl CoA and feruloyl CoA ortho-hydroxylase F6H2-2-1 (358 aa).

Residues 200 to 308 (SKESLLMGSR…RISVPVFVNP (109 aa)) enclose the Fe2OG dioxygenase domain. Tyrosine 216 lines the 2-oxoglutarate pocket. Residues histidine 231, aspartate 233, and histidine 289 each coordinate Fe cation. The 2-oxoglutarate site is built by arginine 299 and serine 301.

Belongs to the iron/ascorbate-dependent oxidoreductase family. L-ascorbate serves as cofactor. It depends on Fe(2+) as a cofactor. In terms of tissue distribution, mostly expressed in underground stems and stems.

It catalyses the reaction (E)-4-coumaroyl-CoA + 2-oxoglutarate + O2 = (E)-2,4-dihydroxycinnamoyl-CoA + succinate + CO2. The catalysed reaction is (E)-feruloyl-CoA + 2-oxoglutarate + O2 = (E)-6-hydroxyferuloyl-CoA + succinate + CO2. Its pathway is phenylpropanoid metabolism. In terms of biological role, 2-oxoglutarate (OG)- and Fe(II)-dependent dioxygenase (2OGD) involved in scopoletin and umbelliferone biosynthesis. Converts feruloyl CoA into 6'-hydroxyferuloyl CoA, and p-coumaroyl CoA into 2,4-dihydroxycinnamoyl-CoA, but has no activity toward caffeoyl-CoA. This Ipomoea batatas (Sweet potato) protein is Bi-functional coumaroyl CoA and feruloyl CoA ortho-hydroxylase F6H2-2-1.